A 237-amino-acid polypeptide reads, in one-letter code: tRNA (guanine-N(7)-)-methyltransferase (237 aa).

4 residues coordinate S-adenosyl-L-methionine: Glu56, Glu81, Asp108, and Asp131. The active site involves Asp131. Residues Lys135, Asp167, and Thr204–Glu207 contribute to the substrate site.

It belongs to the class I-like SAM-binding methyltransferase superfamily. TrmB family.

It catalyses the reaction guanosine(46) in tRNA + S-adenosyl-L-methionine = N(7)-methylguanosine(46) in tRNA + S-adenosyl-L-homocysteine. Its pathway is tRNA modification; N(7)-methylguanine-tRNA biosynthesis. Functionally, catalyzes the formation of N(7)-methylguanine at position 46 (m7G46) in tRNA. The chain is tRNA (guanine-N(7)-)-methyltransferase from Legionella pneumophila (strain Paris).